A 327-amino-acid polypeptide reads, in one-letter code: DNA primase large subunit PriL (327 aa).

Residues C218, C290, C299, and C307 each contribute to the [4Fe-4S] cluster site.

This sequence belongs to the eukaryotic-type primase large subunit family. In terms of assembly, heterodimer of a small subunit (PriS) and a large subunit (PriL). The cofactor is [4Fe-4S] cluster.

Regulatory subunit of DNA primase, an RNA polymerase that catalyzes the synthesis of short RNA molecules used as primers for DNA polymerase during DNA replication. Stabilizes and modulates the activity of the small subunit, increasing the rate of DNA synthesis, and conferring RNA synthesis capability. The DNA polymerase activity may enable DNA primase to also catalyze primer extension after primer synthesis. May also play a role in DNA repair. This Thermoplasma volcanium (strain ATCC 51530 / DSM 4299 / JCM 9571 / NBRC 15438 / GSS1) protein is DNA primase large subunit PriL.